The primary structure comprises 219 residues: Cytidylate kinase (219 aa).

Residue 15–23 (GPAASGKGT) participates in ATP binding.

This sequence belongs to the cytidylate kinase family. Type 1 subfamily.

The protein localises to the cytoplasm. It carries out the reaction CMP + ATP = CDP + ADP. The catalysed reaction is dCMP + ATP = dCDP + ADP. This chain is Cytidylate kinase, found in Brucella suis biovar 1 (strain 1330).